A 515-amino-acid chain; its full sequence is ATP synthase subunit alpha (515 aa).

171–178 lines the ATP pocket; that stretch reads GDRQTGKT.

It belongs to the ATPase alpha/beta chains family. In terms of assembly, F-type ATPases have 2 components, CF(1) - the catalytic core - and CF(0) - the membrane proton channel. CF(1) has five subunits: alpha(3), beta(3), gamma(1), delta(1), epsilon(1). CF(0) has three main subunits: a(1), b(2) and c(9-12). The alpha and beta chains form an alternating ring which encloses part of the gamma chain. CF(1) is attached to CF(0) by a central stalk formed by the gamma and epsilon chains, while a peripheral stalk is formed by the delta and b chains.

Its subcellular location is the cell inner membrane. The catalysed reaction is ATP + H2O + 4 H(+)(in) = ADP + phosphate + 5 H(+)(out). Produces ATP from ADP in the presence of a proton gradient across the membrane. The alpha chain is a regulatory subunit. This Xanthomonas oryzae pv. oryzae (strain MAFF 311018) protein is ATP synthase subunit alpha.